Here is a 346-residue protein sequence, read N- to C-terminus: 2,5-dichlorohydroquinone reductive dechlorinase (346 aa).

One can recognise a GST N-terminal domain in the interval 43–154 (PRFELFHFVF…YLCDALSGGT (112 aa)). The GST C-terminal domain occupies 189–335 (DRRPESMQAV…AIIQWPGHPP (147 aa)).

It belongs to the GST superfamily.

It carries out the reaction 2,5-dichlorohydroquinone + 2 glutathione = chlorohydroquinone + glutathione disulfide + chloride + H(+). The catalysed reaction is chlorohydroquinone + 2 glutathione = hydroquinone + glutathione disulfide + chloride + H(+). It functions in the pathway xenobiotic degradation; gamma-hexachlorocyclohexane degradation. In terms of biological role, catalyzes the degradation of 2,5-dichlorohydroquinone (2,5-DCHQ) into hydroquinone (HQ) via chlorohydroquinone (CHQ). This is 2,5-dichlorohydroquinone reductive dechlorinase from Sphingobium indicum (strain DSM 16412 / CCM 7286 / MTCC 6364 / B90A).